Reading from the N-terminus, the 132-residue chain is 3-aminoacrylate deaminase RutC (132 aa).

It belongs to the RutC family.

The enzyme catalyses (Z)-3-aminoacrylate + H2O + H(+) = 3-oxopropanoate + NH4(+). In terms of biological role, involved in pyrimidine catabolism. Catalyzes the deamination of 3-aminoacrylate to malonic semialdehyde, a reaction that can also occur spontaneously. RutC may facilitate the reaction and modulate the metabolic fitness, rather than catalyzing essential functions. This Cronobacter sakazakii (strain ATCC BAA-894) (Enterobacter sakazakii) protein is 3-aminoacrylate deaminase RutC.